Consider the following 120-residue polypeptide: Large ribosomal subunit protein bL12 (120 aa).

Belongs to the bacterial ribosomal protein bL12 family. As to quaternary structure, homodimer. Part of the ribosomal stalk of the 50S ribosomal subunit. Forms a multimeric L10(L12)X complex, where L10 forms an elongated spine to which 2 to 4 L12 dimers bind in a sequential fashion. Binds GTP-bound translation factors.

Functionally, forms part of the ribosomal stalk which helps the ribosome interact with GTP-bound translation factors. Is thus essential for accurate translation. This is Large ribosomal subunit protein bL12 from Listeria monocytogenes serovar 1/2a (strain ATCC BAA-679 / EGD-e).